The following is a 381-amino-acid chain: E3 ubiquitin-protein ligase Fancl (381 aa).

The UBC-RWD region (URD) stretch occupies residues 110-293; sequence NIYYDILALY…MFDLCYFPMP (184 aa). The RING-CH-type; degenerate zinc-finger motif lies at 303–374; that stretch reads EEDNEELRCN…PFCKAKLSTS (72 aa). Positions 311, 314, 329, 334, 339, 342, 364, and 367 each coordinate Zn(2+).

As to quaternary structure, interacts (via C-terminus) with FANCI and Fancd2.

Its subcellular location is the nucleus. The catalysed reaction is S-ubiquitinyl-[E2 ubiquitin-conjugating enzyme]-L-cysteine + [acceptor protein]-L-lysine = [E2 ubiquitin-conjugating enzyme]-L-cysteine + N(6)-ubiquitinyl-[acceptor protein]-L-lysine.. The protein operates within protein modification; protein ubiquitination. Functionally, ubiquitin ligase protein that mediates monoubiquitination of Fancd2. Ubiquitination of Fancd2 is stimulated by ionising radiation. Together with Fancd2, and probably FANCI, involved in DNA repair of damage caused by agents that induce interstrand cross-links but not agents that cause double strand breaks. This is E3 ubiquitin-protein ligase Fancl from Drosophila melanogaster (Fruit fly).